A 209-amino-acid polypeptide reads, in one-letter code: NADH-ubiquinone oxidoreductase subunit 9 (209 aa).

Belongs to the complex I 30 kDa subunit family. As to quaternary structure, complex I is composed of about 30 different subunits.

It is found in the mitochondrion inner membrane. The catalysed reaction is a ubiquinone + NADH + 5 H(+)(in) = a ubiquinol + NAD(+) + 4 H(+)(out). Its function is as follows. Core subunit of the mitochondrial membrane respiratory chain NADH dehydrogenase (Complex I) that is believed to belong to the minimal assembly required for catalysis. Complex I functions in the transfer of electrons from NADH to the respiratory chain. The immediate electron acceptor for the enzyme is believed to be ubiquinone. This is NADH-ubiquinone oxidoreductase subunit 9 (nad9) from Dictyostelium citrinum (Slime mold).